Reading from the N-terminus, the 142-residue chain is DNA-directed RNA polymerase subunit omega (142 aa).

A disordered region spans residues 93–142 (AWSVPEAGGDEGGDASELLDDEGEGAAAGAEPDFSEMDVPLADLADEDKI). Residues 100–116 (GGDEGGDASELLDDEGE) are compositionally biased toward acidic residues.

It belongs to the RNA polymerase subunit omega family. As to quaternary structure, the RNAP catalytic core consists of 2 alpha, 1 beta, 1 beta' and 1 omega subunit. When a sigma factor is associated with the core the holoenzyme is formed, which can initiate transcription.

The enzyme catalyses RNA(n) + a ribonucleoside 5'-triphosphate = RNA(n+1) + diphosphate. Its function is as follows. Promotes RNA polymerase assembly. Latches the N- and C-terminal regions of the beta' subunit thereby facilitating its interaction with the beta and alpha subunits. The polypeptide is DNA-directed RNA polymerase subunit omega (Rhodospirillum centenum (strain ATCC 51521 / SW)).